The following is a 399-amino-acid chain: Developmentally-regulated G-protein 2 (399 aa).

The 226-residue stretch at Gly63–Gly288 folds into the OBG-type G domain. Residues Gly69–Ser76, Asp115–Ile119, and Asn246–Asp249 each bind GTP. One can recognise a TGS domain in the interval Gly288–Lys366. The segment at Glu372–Gln399 is disordered. Residues Ile388 to Gln399 are compositionally biased toward basic and acidic residues.

It belongs to the TRAFAC class OBG-HflX-like GTPase superfamily. OBG GTPase family.

The protein localises to the cytoplasm. In terms of biological role, binds GDP and GTP, and has low GTPase activity. The protein is Developmentally-regulated G-protein 2 (DRG2) of Arabidopsis thaliana (Mouse-ear cress).